The following is a 296-amino-acid chain: Trimeric intracellular cation channel type A (296 aa).

At 1–19 the chain is on the lumenal side; that stretch reads MELPGALQLGELAAAFASV. The helical transmembrane segment at 20-37 threads the bilayer; the sequence is PVFPLFDAAYFIVSVLYL. At 38-51 the chain is on the cytoplasmic side; the sequence is KYEPGAVEMSRKSP. Residues 52–73 traverse the membrane as a helical segment; it reads FASWLCAMLHCFGSYILADLLL. Glycine 74 provides a ligand contact to Ca(2+). Residues 74 to 85 lie on the Lumenal side of the membrane; that stretch reads GESPIHYFSNNS. Residues 86 to 103 form a helical membrane-spanning segment; it reads SVILATAVWYLIFFCPMN. At 104–107 the chain is on the cytoplasmic side; that stretch reads LFYK. A helical transmembrane segment spans residues 108 to 126; sequence CVSFLPVKLIFVAMKEVVR. Positions 122 and 126 each coordinate a 1,2-diacyl-sn-glycero-3-phospho-(1D-myo-inositol-4,5-bisphosphate). At 127-144 the chain is on the lumenal side; it reads VRKIAAGVHHAHHQYHHG. A helical transmembrane segment spans residues 145–162; that stretch reads WFIMMATGWVKGSGVALM. Topologically, residues 163-183 are cytoplasmic; sequence SNFEQLLRGVWRPETNEILHM. The helical transmembrane segment at 184 to 201 threads the bilayer; that stretch reads SFPTKASLYGTVLFTLQQ. At 202 to 209 the chain is on the lumenal side; sequence THWLPVSE. The helical transmembrane segment at 210 to 230 threads the bilayer; it reads ANLVFFFTMFMIVCKVFMTAT. Residues 231-273 are Cytoplasmic-facing; that stretch reads HSHASPFAPVEGFICPVFFGSVSSGHTSHHNQHGHSHEASYQP. The tract at residues 256–296 is disordered; sequence HTSHHNQHGHSHEASYQPPPPVKSKEELNEGTRKRKAKKAE. The segment covering 278–287 has biased composition (basic and acidic residues); the sequence is KSKEELNEGT.

This sequence belongs to the TMEM38 family. Homotrimer; conformation seems to be controled by binding to diacylglycerol (DAG).

It is found in the sarcoplasmic reticulum membrane. The protein localises to the nucleus membrane. The enzyme catalyses K(+)(in) = K(+)(out). Its activity is regulated as follows. Channel activity is activated by a change of voltage within the sarcoplasmic reticulum lumen and blocked by luminal high Ca(2+) levels. In terms of biological role, intracellular monovalent cation channel required for maintenance of rapid intracellular calcium release. Acts as a potassium counter-ion channel that functions in synchronization with calcium release from intracellular stores. Opened by a change of voltage within the sarcoplasmic reticulum lumen. The protein is Trimeric intracellular cation channel type A (TMEM38A) of Gallus gallus (Chicken).